Consider the following 340-residue polypeptide: Glyceraldehyde-3-phosphate dehydrogenase, cytosolic (340 aa).

NAD(+) is bound by residues 16 to 17 (RI), Asp38, and Arg85. D-glyceraldehyde 3-phosphate contacts are provided by residues 156 to 158 (SCT), Thr187, 216 to 217 (TG), and Arg239. The Nucleophile role is filled by Cys157. Asn321 is a binding site for NAD(+).

This sequence belongs to the glyceraldehyde-3-phosphate dehydrogenase family. As to quaternary structure, homotetramer.

The protein localises to the cytoplasm. It catalyses the reaction D-glyceraldehyde 3-phosphate + phosphate + NAD(+) = (2R)-3-phospho-glyceroyl phosphate + NADH + H(+). Its pathway is carbohydrate degradation; glycolysis; pyruvate from D-glyceraldehyde 3-phosphate: step 1/5. In terms of biological role, key enzyme in glycolysis that catalyzes the first step of the pathway by converting D-glyceraldehyde 3-phosphate (G3P) into 3-phospho-D-glyceroyl phosphate. Essential for the maintenance of cellular ATP levels and carbohydrate metabolism. In Ginkgo biloba (Ginkgo), this protein is Glyceraldehyde-3-phosphate dehydrogenase, cytosolic.